A 445-amino-acid chain; its full sequence is Chromosome partition protein MukF (445 aa).

A leucine-zipper region spans residues 213–241 (LSETSSTLRELQDTLQAASDELQTQILDI).

The protein belongs to the MukF family. As to quaternary structure, interacts, and probably forms a ternary complex, with MukE and MukB via its C-terminal region. The complex formation is stimulated by calcium or magnesium. It is required for an interaction between MukE and MukB.

It is found in the cytoplasm. It localises to the nucleoid. Its function is as follows. Involved in chromosome condensation, segregation and cell cycle progression. May participate in facilitating chromosome segregation by condensation DNA from both sides of a centrally located replisome during cell division. Not required for mini-F plasmid partitioning. Probably acts via its interaction with MukB and MukE. Overexpression results in anucleate cells. It has a calcium binding activity. The polypeptide is Chromosome partition protein MukF (Vibrio parahaemolyticus serotype O3:K6 (strain RIMD 2210633)).